A 317-amino-acid polypeptide reads, in one-letter code: Insulin-like growth factor-binding protein 2 (317 aa).

A signal peptide spans 1–33 (MQPRLGGPALLLLPPLLLLLLLGAGGGDCGARA). The 92-residue stretch at 35–126 (VLFRCPPCTP…VHGEGTCEKH (92 aa)) folds into the IGFBP N-terminal domain. Intrachain disulfides connect Cys-39-Cys-76, Cys-42-Cys-78, Cys-50-Cys-79, Cys-68-Cys-82, Cys-90-Cys-103, and Cys-97-Cys-123. Disordered regions lie at residues 126-146 (HGDA…EEHS) and 190-218 (QHRQ…ARTP). Residues 216–298 (RTPCQQELDQ…APTIRGDPEC (83 aa)) form the Thyroglobulin type-1 domain. Disulfide bonds link Cys-219–Cys-253, Cys-264–Cys-275, and Cys-277–Cys-298. Residues 293-295 (RGD) carry the Cell attachment site motif.

Interacts with IGF1. Interacts with IGF2. Interacts (via RGD motif) with integrin alpha5/ITGA5; this interaction induces cell migration, adhesion or apoptosis according to the context. Interacts with PTPRB; this interaction leads to PTPRB dimerization and inactivation. Post-translationally, cleaved by MMP9 leading to release of free IGF2 from IGFBP2-IGF2 complex, which contributes to enhance the motility and the growth of astrocytes. In terms of processing, O-glycosylated.

The protein resides in the secreted. Multifunctional protein that plays a critical role in regulating the availability of IGFs such as IGF1 and IGF2 to their receptors and thereby regulates IGF-mediated cellular processes including proliferation, differentiation, and apoptosis in a cell-type specific manner. Functions coordinately with receptor protein tyrosine phosphatase beta/PTPRB and the IGF1 receptor to regulate IGF1-mediated signaling by stimulating the phosphorylation of PTEN leading to its inactivation and AKT1 activation. Plays a positive role in cell migration via interaction with integrin alpha5/ITGA5 through an RGD motif. Additionally, interaction with ITGA5/ITGB1 enhances the adhesion of endothelial progenitor cells to endothelial cells. Upon mitochondrial damage, facilitates apoptosis with ITGA5 of podocytes, and then activates the phosphorylation of focal adhesion kinase (FAK)-mediated mitochondrial injury. This Bos taurus (Bovine) protein is Insulin-like growth factor-binding protein 2 (IGFBP2).